Reading from the N-terminus, the 384-residue chain is Substance-K receptor (384 aa).

Residues 1–32 (MGACVVMTDINISSGLDSNATGITAFSMPGWQ) are Extracellular-facing. Residues Asn11 and Asn19 are each glycosylated (N-linked (GlcNAc...) asparagine). The helical transmembrane segment at 33–56 (LALWTAAYLALVLVAVMGNATVIW) threads the bilayer. Residues 57 to 69 (IILAHQRMRTVTN) are Cytoplasmic-facing. The helical transmembrane segment at 70 to 90 (YFIVNLALADLCMAAFNAAFN) threads the bilayer. The Extracellular segment spans residues 91–107 (FVYASHNIWYFGRAFCY). An intrachain disulfide couples Cys106 to Cys181. Residues 108–129 (FQNLFPITAMFVSIYSMTAIAA) form a helical membrane-spanning segment. Topologically, residues 130–149 (DRYMAIVHPFQPRLSAPGTR) are cytoplasmic. A helical membrane pass occupies residues 150 to 170 (AVIAGIWLVALALAFPQCFYS). Topologically, residues 171-196 (TITTDEGATKCVVAWPEDSGGKMLLL) are extracellular. A helical transmembrane segment spans residues 197–218 (YHLIVIALIYFLPLVVMFVAYS). Residues 219 to 251 (VIGLTLWRRSVPGHQAHGANLRHLQAKKKFVKT) lie on the Cytoplasmic side of the membrane. Residues 252–272 (MVLVVVTFAICWLPYHLYFIL) form a helical membrane-spanning segment. At 273-290 (GTFQEDIYCHKFIQQVYL) the chain is on the extracellular side. Residues 291 to 310 (ALFWLAMSSTMYNPIIYCCL) form a helical membrane-spanning segment. Over 311 to 384 (NHRFRSGFRL…SPQAGVSTEP (74 aa)) the chain is Cytoplasmic. A lipid anchor (S-palmitoyl cysteine) is attached at Cys324.

Belongs to the G-protein coupled receptor 1 family.

The protein resides in the cell membrane. Its function is as follows. This is a receptor for the tachykinin neuropeptide substance K (neurokinin A). It is associated with G proteins that activate a phosphatidylinositol-calcium second messenger system. The rank order of affinity of this receptor to tachykinins is: substance K &gt; neuromedin-K &gt; substance P. The sequence is that of Substance-K receptor (TACR2) from Bos taurus (Bovine).